Here is a 764-residue protein sequence, read N- to C-terminus: 1,4-alpha-glucan branching enzyme GlgB (764 aa).

Asp-434 functions as the Nucleophile in the catalytic mechanism. The active-site Proton donor is the Glu-487.

It belongs to the glycosyl hydrolase 13 family. GlgB subfamily. Monomer.

The catalysed reaction is Transfers a segment of a (1-&gt;4)-alpha-D-glucan chain to a primary hydroxy group in a similar glucan chain.. It functions in the pathway glycan biosynthesis; glycogen biosynthesis. In terms of biological role, catalyzes the formation of the alpha-1,6-glucosidic linkages in glycogen by scission of a 1,4-alpha-linked oligosaccharide from growing alpha-1,4-glucan chains and the subsequent attachment of the oligosaccharide to the alpha-1,6 position. This chain is 1,4-alpha-glucan branching enzyme GlgB, found in Trichormus variabilis (strain ATCC 29413 / PCC 7937) (Anabaena variabilis).